The primary structure comprises 559 residues: 5'-AMP-activated protein kinase catalytic subunit alpha-1 (559 aa).

The region spanning 27-279 is the Protein kinase domain; that stretch reads YILGDTLGVG…IKDIREHEWF (253 aa). Thr-32 is subject to Phosphothreonine. Residues 33 to 41 and Lys-56 contribute to the ATP site; that span reads LGVGTFGKV. Asp-150 serves as the catalytic Proton acceptor. Thr-183 bears the Phosphothreonine; by LKB1 and CaMKK2 mark. Positions 302 to 381 are AIS; sequence EALKEVCEKF…PERVPFLVAE (80 aa). Thr-355 carries the phosphothreonine modification. Ser-356 carries the post-translational modification Phosphoserine. At Ser-360 the chain carries Phosphoserine; by ULK1. Thr-368 is subject to Phosphothreonine; by ULK1. The residue at position 382 (Thr-382) is a Phosphothreonine. Position 397 is a phosphoserine; by ULK1 (Ser-397). Phosphoserine is present on residues Ser-467 and Ser-486. The span at 485 to 505 shows a compositional bias: polar residues; it reads KSGTATPQRSGSISNYRSCQR. The interval 485–536 is disordered; it reads KSGTATPQRSGSISNYRSCQRSDSDAEAQGKPSDVSLTSSVTSLDSSPVDVA. Phosphothreonine; by ULK1 is present on Thr-488. Residue Thr-490 is modified to Phosphothreonine. A phosphoserine mark is found at Ser-496, Ser-508, Ser-524, and Ser-527. The segment covering 516–535 has biased composition (low complexity); sequence PSDVSLTSSVTSLDSSPVDV.

This sequence belongs to the protein kinase superfamily. CAMK Ser/Thr protein kinase family. SNF1 subfamily. AMPK is a heterotrimer of an alpha catalytic subunit (PRKAA1 or PRKAA2), a beta (PRKAB1 or PRKAB2) and a gamma non-catalytic subunits (PRKAG1, PRKAG2 or PRKAG3). Interacts with FNIP1 and FNIP2. Mg(2+) serves as cofactor. Post-translationally, phosphorylated at Thr-183 by STK11/LKB1 in complex with STE20-related adapter-alpha (STRADA) pseudo kinase and CAB39. Also phosphorylated at Thr-183 by CAMKK2; triggered by a rise in intracellular calcium ions, without detectable changes in the AMP/ATP ratio. CAMKK1 can also phosphorylate Thr-183, but at a much lower level. Dephosphorylated by protein phosphatase 2A and 2C (PP2A and PP2C). Phosphorylated by ULK1 and ULK2; leading to negatively regulate AMPK activity and suggesting the existence of a regulatory feedback loop between ULK1, ULK2 and AMPK. Dephosphorylated by PPM1A and PPM1B. Ubiquitinated. In terms of processing, glycosylated; O-GlcNAcylated by OGT, promoting the AMP-activated protein kinase (AMPK) activity.

It is found in the cytoplasm. The protein resides in the nucleus. The catalysed reaction is L-seryl-[protein] + ATP = O-phospho-L-seryl-[protein] + ADP + H(+). It catalyses the reaction L-threonyl-[protein] + ATP = O-phospho-L-threonyl-[protein] + ADP + H(+). It carries out the reaction L-seryl-[acetyl-CoA carboxylase] + ATP = O-phospho-L-seryl-[acetyl-CoA carboxylase] + ADP + H(+). The enzyme catalyses L-seryl-[3-hydroxy-3-methylglutaryl-coenzyme A reductase] + ATP = O-phospho-L-seryl-[3-hydroxy-3-methylglutaryl-coenzyme A reductase] + ADP + H(+). The catalysed reaction is L-seryl-[tau protein] + ATP = O-phospho-L-seryl-[tau protein] + ADP + H(+). It catalyses the reaction L-threonyl-[tau protein] + ATP = O-phospho-L-threonyl-[tau protein] + ADP + H(+). With respect to regulation, activated by phosphorylation on Thr-183. Binding of AMP to non-catalytic gamma subunit (PRKAG1, PRKAG2 or PRKAG3) results in allosteric activation, inducing phosphorylation on Thr-183. AMP-binding to gamma subunit also sustains activity by preventing dephosphorylation of Thr-183. ADP also stimulates Thr-183 phosphorylation, without stimulating already phosphorylated AMPK. ATP promotes dephosphorylation of Thr-183, rendering the enzyme inactive. Under physiological conditions AMPK mainly exists in its inactive form in complex with ATP, which is much more abundant than AMP. Selectively inhibited by compound C (6-[4-(2-Piperidin-1-yl-ethoxy)-phenyl)]-3-pyridin-4-yl-pyyrazolo[1,5-a] pyrimidine. Activated by resveratrol, a natural polyphenol present in red wine, and S17834, a synthetic polyphenol. Catalytic subunit of AMP-activated protein kinase (AMPK), an energy sensor protein kinase that plays a key role in regulating cellular energy metabolism. In response to reduction of intracellular ATP levels, AMPK activates energy-producing pathways and inhibits energy-consuming processes: inhibits protein, carbohydrate and lipid biosynthesis, as well as cell growth and proliferation. AMPK acts via direct phosphorylation of metabolic enzymes, and by longer-term effects via phosphorylation of transcription regulators. Regulates lipid synthesis by phosphorylating and inactivating lipid metabolic enzymes such as ACACA, ACACB, GYS1, HMGCR and LIPE; regulates fatty acid and cholesterol synthesis by phosphorylating acetyl-CoA carboxylase (ACACA and ACACB) and hormone-sensitive lipase (LIPE) enzymes, respectively. Promotes lipolysis of lipid droplets by mediating phosphorylation of isoform 1 of CHKA (CHKalpha2). Regulates insulin-signaling and glycolysis by phosphorylating IRS1, PFKFB2 and PFKFB3. AMPK stimulates glucose uptake in muscle by increasing the translocation of the glucose transporter SLC2A4/GLUT4 to the plasma membrane, possibly by mediating phosphorylation of TBC1D4/AS160. Regulates transcription and chromatin structure by phosphorylating transcription regulators involved in energy metabolism such as CRTC2/TORC2, FOXO3, histone H2B, HDAC5, MEF2C, MLXIPL/ChREBP, EP300, HNF4A, p53/TP53, SREBF1, SREBF2 and PPARGC1A. Acts as a key regulator of glucose homeostasis in liver by phosphorylating CRTC2/TORC2, leading to CRTC2/TORC2 sequestration in the cytoplasm. In response to stress, phosphorylates 'Ser-36' of histone H2B (H2BS36ph), leading to promote transcription. Acts as a key regulator of cell growth and proliferation by phosphorylating FNIP1, TSC2, RPTOR, WDR24 and ATG1/ULK1: in response to nutrient limitation, negatively regulates the mTORC1 complex by phosphorylating RPTOR component of the mTORC1 complex and by phosphorylating and activating TSC2. Also phosphorylates and inhibits GATOR2 subunit WDR24 in response to nutrient limitation, leading to suppress glucose-mediated mTORC1 activation. In response to energetic stress, phosphorylates FNIP1, inactivating the non-canonical mTORC1 signaling, thereby promoting nuclear translocation of TFEB and TFE3, and inducing transcription of lysosomal or autophagy genes. In response to nutrient limitation, promotes autophagy by phosphorylating and activating ATG1/ULK1. In that process, it also activates WDR45/WIPI4. Phosphorylates CASP6, thereby preventing its autoprocessing and subsequent activation. In response to nutrient limitation, phosphorylates transcription factor FOXO3 promoting FOXO3 mitochondrial import. Also acts as a regulator of cellular polarity by remodeling the actin cytoskeleton; probably by indirectly activating myosin. AMPK also acts as a regulator of circadian rhythm by mediating phosphorylation of CRY1, leading to destabilize it. May regulate the Wnt signaling pathway by phosphorylating CTNNB1, leading to stabilize it. Also has tau-protein kinase activity: in response to amyloid beta A4 protein (APP) exposure, activated by CAMKK2, leading to phosphorylation of MAPT/TAU; however the relevance of such data remains unclear in vivo. Also phosphorylates CFTR, EEF2K, KLC1, NOS3 and SLC12A1. Regulates hepatic lipogenesis. Activated via SIRT3, represses sterol regulatory element-binding protein (SREBP) transcriptional activities and ATP-consuming lipogenesis to restore cellular energy balance. Upon stress, regulates mitochondrial fragmentation through phosphorylation of MTFR1L. In Mus musculus (Mouse), this protein is 5'-AMP-activated protein kinase catalytic subunit alpha-1 (Prkaa1).